Reading from the N-terminus, the 38-residue chain is Large ribosomal subunit protein bL36 (38 aa).

The protein belongs to the bacterial ribosomal protein bL36 family.

This Baumannia cicadellinicola subsp. Homalodisca coagulata protein is Large ribosomal subunit protein bL36.